Here is a 546-residue protein sequence, read N- to C-terminus: Chaperonin GroEL (546 aa).

Residues 30–33, lysine 51, 87–91, glycine 415, 479–481, and aspartate 495 contribute to the ATP site; these read TLGP, DGTTT, and NAA. Positions 527-546 are disordered; the sequence is EEKPDVSASSGGMGGMGGMM. The segment covering 537-546 has biased composition (gly residues); sequence GGMGGMGGMM.

The protein belongs to the chaperonin (HSP60) family. Forms a cylinder of 14 subunits composed of two heptameric rings stacked back-to-back. Interacts with the co-chaperonin GroES.

The protein resides in the cytoplasm. It catalyses the reaction ATP + H2O + a folded polypeptide = ADP + phosphate + an unfolded polypeptide.. In terms of biological role, together with its co-chaperonin GroES, plays an essential role in assisting protein folding. The GroEL-GroES system forms a nano-cage that allows encapsulation of the non-native substrate proteins and provides a physical environment optimized to promote and accelerate protein folding. The protein is Chaperonin GroEL of Baumannia cicadellinicola subsp. Homalodisca coagulata.